The primary structure comprises 457 residues: Cysteine--tRNA ligase (457 aa).

Zn(2+) is bound at residue cysteine 28. The 'HIGH' region motif lies at 30-40 (ITVYDLCHIGH). The Zn(2+) site is built by cysteine 209, histidine 234, and glutamate 238. Positions 266–270 (KMSKS) match the 'KMSKS' region motif. Lysine 269 is an ATP binding site.

It belongs to the class-I aminoacyl-tRNA synthetase family. Monomer. It depends on Zn(2+) as a cofactor.

The protein resides in the cytoplasm. It carries out the reaction tRNA(Cys) + L-cysteine + ATP = L-cysteinyl-tRNA(Cys) + AMP + diphosphate. In Sodalis glossinidius (strain morsitans), this protein is Cysteine--tRNA ligase.